Here is a 614-residue protein sequence, read N- to C-terminus: Dolichyl-diphosphooligosaccharide--protein glycosyltransferase subunit 1A (614 aa).

The signal sequence occupies residues 1–25; that stretch reads MKQSSVVDLLLLLLAIALLATPAFS. The Lumenal portion of the chain corresponds to 26–432; sequence DLVLSKVERR…QVYYKFSNIN (407 aa). N-linked (GlcNAc...) asparagine glycans are attached at residues N94 and N299. K311 participates in a covalent cross-link: Glycyl lysine isopeptide (Lys-Gly) (interchain with G-Cter in ubiquitin). An N-linked (GlcNAc...) asparagine glycan is attached at N352. Residues 433–453 form a helical membrane-spanning segment; the sequence is LLSEPLMLISGFFILFITCII. Topologically, residues 454-614 are cytoplasmic; sequence YTRADISISK…EDLLEFIDEI (161 aa).

Belongs to the OST1 family. As to quaternary structure, component of the oligosaccharyltransferase (OST) complex.

It localises to the endoplasmic reticulum membrane. It functions in the pathway protein modification; protein glycosylation. Its function is as follows. Subunit of the oligosaccharyl transferase (OST) complex that catalyzes the initial transfer of a defined glycan (Glc(3)Man(9)GlcNAc(2) in eukaryotes) from the lipid carrier dolichol-pyrophosphate to an asparagine residue within an Asn-X-Ser/Thr consensus motif in nascent polypeptide chains, the first step in protein N-glycosylation. N-glycosylation occurs cotranslationally and the complex associates with the Sec61 complex at the channel-forming translocon complex that mediates protein translocation across the endoplasmic reticulum (ER). All subunits are required for a maximal enzyme activity. This Arabidopsis thaliana (Mouse-ear cress) protein is Dolichyl-diphosphooligosaccharide--protein glycosyltransferase subunit 1A (OST1A).